The following is a 266-amino-acid chain: Glutamate racemase (266 aa).

Substrate is bound by residues 9–10 (DS) and 41–42 (YG). Cys72 (proton donor/acceptor) is an active-site residue. 73 to 74 (NT) lines the substrate pocket. Cys184 (proton donor/acceptor) is an active-site residue. 185 to 186 (TH) lines the substrate pocket.

Belongs to the aspartate/glutamate racemases family.

It catalyses the reaction L-glutamate = D-glutamate. It participates in cell wall biogenesis; peptidoglycan biosynthesis. In terms of biological role, provides the (R)-glutamate required for cell wall biosynthesis. The polypeptide is Glutamate racemase (Staphylococcus haemolyticus (strain JCSC1435)).